Consider the following 226-residue polypeptide: Protein YAE1 homolog (226 aa).

The tract at residues 45-85 is deca-GX3 motif; required for interaction with LTO1; that stretch reads GYRDGIDAGKAVTLQQGFNQGYKKGAEVILNYGRLRGTLSA.

As to quaternary structure, forms a complex with LTO1.

The protein localises to the cytoplasm. The protein resides in the nucleus. In terms of biological role, the complex LTO1:YAE1 functions as a target specific adapter that probably recruits apo-ABCE1 to the cytosolic iron-sulfur protein assembly (CIA) complex machinery. May be required for biogenesis of the large ribosomal subunit and initiation of translation. This Homo sapiens (Human) protein is Protein YAE1 homolog.